The primary structure comprises 328 residues: tRNA N6-adenosine threonylcarbamoyltransferase (328 aa).

2 residues coordinate Fe cation: H111 and H115. Substrate contacts are provided by residues 133–137 (LVSGG), D166, G179, D183, and N270. D296 contacts Fe cation.

This sequence belongs to the KAE1 / TsaD family. It depends on Fe(2+) as a cofactor.

It localises to the cytoplasm. The catalysed reaction is L-threonylcarbamoyladenylate + adenosine(37) in tRNA = N(6)-L-threonylcarbamoyladenosine(37) in tRNA + AMP + H(+). In terms of biological role, required for the formation of a threonylcarbamoyl group on adenosine at position 37 (t(6)A37) in tRNAs that read codons beginning with adenine. Is involved in the transfer of the threonylcarbamoyl moiety of threonylcarbamoyl-AMP (TC-AMP) to the N6 group of A37, together with TsaE and TsaB. TsaD likely plays a direct catalytic role in this reaction. This chain is tRNA N6-adenosine threonylcarbamoyltransferase, found in Phytoplasma australiense.